An 88-amino-acid polypeptide reads, in one-letter code: Small ribosomal subunit protein uS15 (88 aa).

The protein belongs to the universal ribosomal protein uS15 family. In terms of assembly, part of the 30S ribosomal subunit. Forms a bridge to the 50S subunit in the 70S ribosome, contacting the 23S rRNA.

Functionally, one of the primary rRNA binding proteins, it binds directly to 16S rRNA where it helps nucleate assembly of the platform of the 30S subunit by binding and bridging several RNA helices of the 16S rRNA. Forms an intersubunit bridge (bridge B4) with the 23S rRNA of the 50S subunit in the ribosome. The chain is Small ribosomal subunit protein uS15 from Methylacidiphilum infernorum (isolate V4) (Methylokorus infernorum (strain V4)).